The primary structure comprises 267 residues: Hydroxyethylthiazole kinase (267 aa).

A substrate-binding site is contributed by methionine 48. ATP contacts are provided by arginine 124 and serine 170. Glycine 197 contacts substrate.

It belongs to the Thz kinase family. Requires Mg(2+) as cofactor.

The catalysed reaction is 5-(2-hydroxyethyl)-4-methylthiazole + ATP = 4-methyl-5-(2-phosphooxyethyl)-thiazole + ADP + H(+). Its pathway is cofactor biosynthesis; thiamine diphosphate biosynthesis; 4-methyl-5-(2-phosphoethyl)-thiazole from 5-(2-hydroxyethyl)-4-methylthiazole: step 1/1. Its function is as follows. Catalyzes the phosphorylation of the hydroxyl group of 4-methyl-5-beta-hydroxyethylthiazole (THZ). In Aliivibrio fischeri (strain ATCC 700601 / ES114) (Vibrio fischeri), this protein is Hydroxyethylthiazole kinase.